Consider the following 139-residue polypeptide: Probable trafficking protein particle complex subunit 2 (139 aa).

The protein belongs to the TRAPP small subunits family. Sedlin subfamily. Part of the multisubunit TRAPP (transport protein particle) complex.

Its subcellular location is the cytoplasm. It is found in the perinuclear region. The protein resides in the endoplasmic reticulum. The protein localises to the golgi apparatus. In terms of biological role, may play a role in vesicular transport from endoplasmic reticulum to Golgi. Involved in dsRNA uptake. The polypeptide is Probable trafficking protein particle complex subunit 2 (Drosophila melanogaster (Fruit fly)).